The following is a 752-amino-acid chain: Maltodextrin phosphorylase (752 aa).

Position 603 is an N6-(pyridoxal phosphate)lysine (lysine 603).

The protein belongs to the glycogen phosphorylase family. The cofactor is pyridoxal 5'-phosphate.

It carries out the reaction [(1-&gt;4)-alpha-D-glucosyl](n) + phosphate = [(1-&gt;4)-alpha-D-glucosyl](n-1) + alpha-D-glucose 1-phosphate. In terms of biological role, phosphorylase is an important allosteric enzyme in carbohydrate metabolism. Enzymes from different sources differ in their regulatory mechanisms and in their natural substrates. However, all known phosphorylases share catalytic and structural properties. This chain is Maltodextrin phosphorylase (malP), found in Streptococcus pneumoniae serotype 4 (strain ATCC BAA-334 / TIGR4).